A 469-amino-acid polypeptide reads, in one-letter code: Squamosa promoter-binding-like protein 3 (469 aa).

Residues 96–118 form a disordered region; sequence SAEEHDKNMDKGKSKVDDTGTSR. Residues 97–115 are compositionally biased toward basic and acidic residues; the sequence is AEEHDKNMDKGKSKVDDTG. An SBP-type zinc finger spans residues 179–256; it reads NPHCQVEGCN…HDHNARRRKP (78 aa). Cys182, Cys187, Cys204, His207, Cys223, Cys226, His230, and Cys242 together coordinate Zn(2+). A Bipartite nuclear localization signal motif is present at residues 239–255; it reads KRSCRRRLHDHNARRRK. Positions 446-469 are disordered; the sequence is NDDDEDHLQLPKPSYDNSHYDQMN. Polar residues predominate over residues 460-469; the sequence is YDNSHYDQMN.

In terms of tissue distribution, ubiquitous.

It localises to the nucleus. Trans-acting factor that binds specifically to the consensus nucleotide sequence 5'-TNCGTACAA-3'. May be involved in panicle development. This Oryza sativa subsp. indica (Rice) protein is Squamosa promoter-binding-like protein 3 (SPL3).